The sequence spans 307 residues: Porphobilinogen deaminase (307 aa).

Cys241 carries the S-(dipyrrolylmethanemethyl)cysteine modification.

Belongs to the HMBS family. In terms of assembly, monomer. Dipyrromethane is required as a cofactor.

The enzyme catalyses 4 porphobilinogen + H2O = hydroxymethylbilane + 4 NH4(+). It functions in the pathway porphyrin-containing compound metabolism; protoporphyrin-IX biosynthesis; coproporphyrinogen-III from 5-aminolevulinate: step 2/4. Its function is as follows. Tetrapolymerization of the monopyrrole PBG into the hydroxymethylbilane pre-uroporphyrinogen in several discrete steps. The sequence is that of Porphobilinogen deaminase from Coxiella burnetii (strain CbuK_Q154) (Coxiella burnetii (strain Q154)).